A 443-amino-acid chain; its full sequence is Protein king tubby (443 aa).

Disordered regions lie at residues 57 to 80 (TNGSPGGINSVAMNTSRNHSNNMR) and 98 to 191 (HELE…EGDV). A compositionally biased stretch (polar residues) spans 67 to 80 (VAMNTSRNHSNNMR). Over residues 113–128 (QQQQSASHSANSTQSQ) the composition is skewed to low complexity. Ser-136 bears the Phosphoserine mark. Residues 177-186 (NGTGNGTGGE) are compositionally biased toward gly residues.

This sequence belongs to the TUB family.

It localises to the cytoplasm. It is found in the nucleus. Its subcellular location is the cell projection. The protein resides in the cilium membrane. The protein localises to the rhabdomere. The sequence is that of Protein king tubby from Drosophila sechellia (Fruit fly).